A 693-amino-acid polypeptide reads, in one-letter code: MDYNKLRNIGISAHIDSGKTTLTERILFYCNKIHAIHEVKGKDGVGATMDSMELERERGITIASAATHVEWKDFPINIIDTPGHVDFTIEVERSLRVLDGAILVLDSVAGVQSQSITVDRQLKRYSVPRLAFVNKCDKTGANPYNVRDQLRSKLDLNSVLMQIPIGLEDKHIGVIDLVLMKAYYFEGKDGTEIIEKEIPSDLLGEAKKKREIMLDALADFNDELMELHMEGKDVPIEIICNAIRTGTLALKLCPVFMGSAYKNKGVQLLLDAVTRFLPSPHDIKNTALDINNNEKEIDLKIDNDLPTVALAFKLEDGQYGQLTYVRIYQGTLRKGQELINSRTSKKFKVGRLIRMHANNTEDIEFGGSGDIVALFGIECASGDTFCDPSINYSMTSMFIPDPVISLSVKPKDKKSADNMAKALGRFTKEDPTFKTYVDIESNETIIQGMGELHLEVYIERMKREFKAEVETGMPQVAYRETITGKAEFNYTHKKQSGGAGQFGRVAGFMEPLNKEGETYEFVNLIKGGVIPTEYIPSCDKGFQKAMEKGTLIGFPIVDIKITINDGQYHIVDSSDIAFQLAAIGAFREAYEKAKPTILEPIMKVTLEGPTEFQGNMFGLLNQRRGIITGSLEDGSFSKVEAEVPLSEMFGFSTVLRSSTQGKAEFSMEFLKYGKVPNAIFDELRKKFNDQNKS.

Positions 4–281 (NKLRNIGISA…AVTRFLPSPH (278 aa)) constitute a tr-type G domain. GTP is bound by residues 13 to 20 (AHIDSGKT), 80 to 84 (DTPGH), and 134 to 137 (NKCD).

Belongs to the TRAFAC class translation factor GTPase superfamily. Classic translation factor GTPase family. EF-G/EF-2 subfamily.

It is found in the cytoplasm. Catalyzes the GTP-dependent ribosomal translocation step during translation elongation. During this step, the ribosome changes from the pre-translocational (PRE) to the post-translocational (POST) state as the newly formed A-site-bound peptidyl-tRNA and P-site-bound deacylated tRNA move to the P and E sites, respectively. Catalyzes the coordinated movement of the two tRNA molecules, the mRNA and conformational changes in the ribosome. This chain is Elongation factor G 1, found in Borrelia garinii subsp. bavariensis (strain ATCC BAA-2496 / DSM 23469 / PBi) (Borreliella bavariensis).